Reading from the N-terminus, the 375-residue chain is Trichodiene synthase (375 aa).

It belongs to the trichodiene synthase family.

The enzyme catalyses (2E,6E)-farnesyl diphosphate = trichodiene + diphosphate. The protein operates within sesquiterpene biosynthesis; trichothecene biosynthesis. TS is a member of the terpene cyclase group of enzymes. It catalyzes the isomerization and cyclization of farnesyl pyro-phosphate to form trichodiene, the first cyclic intermediate in the biosynthetic pathway for trichothecenes. It serves to branch trichothecene biosynthesis from the isoprenoid pathway. This is Trichodiene synthase (TRI5) from Gibberella zeae (strain ATCC MYA-4620 / CBS 123657 / FGSC 9075 / NRRL 31084 / PH-1) (Wheat head blight fungus).